Here is a 342-residue protein sequence, read N- to C-terminus: S-adenosylmethionine:tRNA ribosyltransferase-isomerase (342 aa).

The protein belongs to the QueA family. As to quaternary structure, monomer.

It is found in the cytoplasm. The catalysed reaction is 7-aminomethyl-7-carbaguanosine(34) in tRNA + S-adenosyl-L-methionine = epoxyqueuosine(34) in tRNA + adenine + L-methionine + 2 H(+). It participates in tRNA modification; tRNA-queuosine biosynthesis. Transfers and isomerizes the ribose moiety from AdoMet to the 7-aminomethyl group of 7-deazaguanine (preQ1-tRNA) to give epoxyqueuosine (oQ-tRNA). The protein is S-adenosylmethionine:tRNA ribosyltransferase-isomerase of Bacillus subtilis (strain 168).